The following is a 295-amino-acid chain: Pyridoxal 5'-phosphate synthase subunit PdxS (295 aa).

Residue D25 coordinates D-ribose 5-phosphate. K82 (schiff-base intermediate with D-ribose 5-phosphate) is an active-site residue. G154 contributes to the D-ribose 5-phosphate binding site. D-glyceraldehyde 3-phosphate is bound at residue R166. D-ribose 5-phosphate-binding positions include G215 and 236–237 (GS).

Belongs to the PdxS/SNZ family. In terms of assembly, in the presence of PdxT, forms a dodecamer of heterodimers.

The catalysed reaction is aldehydo-D-ribose 5-phosphate + D-glyceraldehyde 3-phosphate + L-glutamine = pyridoxal 5'-phosphate + L-glutamate + phosphate + 3 H2O + H(+). The protein operates within cofactor biosynthesis; pyridoxal 5'-phosphate biosynthesis. Functionally, catalyzes the formation of pyridoxal 5'-phosphate from ribose 5-phosphate (RBP), glyceraldehyde 3-phosphate (G3P) and ammonia. The ammonia is provided by the PdxT subunit. Can also use ribulose 5-phosphate and dihydroxyacetone phosphate as substrates, resulting from enzyme-catalyzed isomerization of RBP and G3P, respectively. The sequence is that of Pyridoxal 5'-phosphate synthase subunit PdxS from Bacillus cereus (strain 03BB102).